A 39-amino-acid polypeptide reads, in one-letter code: Natriuretic peptide CnNP-a (39 aa).

Residues 1 to 8 (SGSKTAKI) constitute a propeptide that is removed on maturation. A disulfide bridge links C12 with C28.

It belongs to the natriuretic peptide family. Expressed by the venom gland.

Its subcellular location is the secreted. Snake venom natriuretic peptide that targets both NPR1 and NPR2. Exhibits hypotensive and vasodepressor activities. The polypeptide is Natriuretic peptide CnNP-a (Cryptophis nigrescens (Eastern small-eyed snake)).